The chain runs to 520 residues: Poly(A)-specific ribonuclease PNLDC1 (520 aa).

Mg(2+)-binding residues include aspartate 17, glutamate 19, aspartate 260, and aspartate 354. The chain crosses the membrane as a helical span at residues 495–515 (VNCLLQVCGIVTAWALLAFIL).

It belongs to the CAF1 family. Mg(2+) serves as cofactor.

The protein resides in the endoplasmic reticulum membrane. It carries out the reaction Exonucleolytic cleavage of poly(A) to 5'-AMP.. Its function is as follows. 3'-exoribonuclease that has a preference for poly(A) tails of mRNAs, thereby efficiently degrading poly(A) tails. Exonucleolytic degradation of the poly(A) tail is often the first step in the decay of eukaryotic mRNAs and is also used to silence certain maternal mRNAs translationally during oocyte maturation and early embryonic development. May act as a regulator of multipotency in embryonic stem cells. Is a critical factor for proper spermatogenesis, involved in pre-piRNAs processing to generate mature piRNAs. This is Poly(A)-specific ribonuclease PNLDC1 from Homo sapiens (Human).